The primary structure comprises 342 residues: UDP-N-acetylglucosamine--N-acetylmuramyl-(pentapeptide) pyrophosphoryl-undecaprenol N-acetylglucosamine transferase (342 aa).

UDP-N-acetyl-alpha-D-glucosamine contacts are provided by residues 10–12, Asn124, Ser177, and Gln275; that span reads TGG.

It belongs to the glycosyltransferase 28 family. MurG subfamily.

The protein resides in the cell inner membrane. The enzyme catalyses di-trans,octa-cis-undecaprenyl diphospho-N-acetyl-alpha-D-muramoyl-L-alanyl-D-glutamyl-meso-2,6-diaminopimeloyl-D-alanyl-D-alanine + UDP-N-acetyl-alpha-D-glucosamine = di-trans,octa-cis-undecaprenyl diphospho-[N-acetyl-alpha-D-glucosaminyl-(1-&gt;4)]-N-acetyl-alpha-D-muramoyl-L-alanyl-D-glutamyl-meso-2,6-diaminopimeloyl-D-alanyl-D-alanine + UDP + H(+). It functions in the pathway cell wall biogenesis; peptidoglycan biosynthesis. Cell wall formation. Catalyzes the transfer of a GlcNAc subunit on undecaprenyl-pyrophosphoryl-MurNAc-pentapeptide (lipid intermediate I) to form undecaprenyl-pyrophosphoryl-MurNAc-(pentapeptide)GlcNAc (lipid intermediate II). This is UDP-N-acetylglucosamine--N-acetylmuramyl-(pentapeptide) pyrophosphoryl-undecaprenol N-acetylglucosamine transferase from Campylobacter jejuni (strain RM1221).